The following is a 420-amino-acid chain: Protein translocase subunit SecF (420 aa).

The next 6 membrane-spanning stretches (helical) occupy residues Phe-7–Leu-27, Leu-250–Val-270, Trp-276–Phe-296, Ile-309–Phe-327, Val-358–Gly-378, and Val-388–Ile-408.

It belongs to the SecD/SecF family. SecF subfamily. Forms a complex with SecD. Part of the essential Sec protein translocation apparatus which comprises SecA, SecYEG and auxiliary proteins SecDF. Other proteins may also be involved.

Its subcellular location is the cell inner membrane. Part of the Sec protein translocase complex. Interacts with the SecYEG preprotein conducting channel. SecDF uses the proton motive force (PMF) to complete protein translocation after the ATP-dependent function of SecA. The protein is Protein translocase subunit SecF of Treponema pallidum (strain Nichols).